The primary structure comprises 437 residues: O-methyltransferase 10 (437 aa).

S-adenosyl-L-methionine is bound by residues G259, E282, N315, and M316. H335 serves as the catalytic Proton acceptor.

Belongs to the class I-like SAM-binding methyltransferase superfamily. Cation-independent O-methyltransferase family. COMT subfamily.

It carries out the reaction (3,5-dichloro-2,4,6-trihydroxyphenyl)hexan-1-one + S-adenosyl-L-methionine = 1-(3,5-dichloro-2,6-dihydroxy-4-methoxyphenyl)hexan-1-one + S-adenosyl-L-homocysteine + H(+). This Dictyostelium discoideum (Social amoeba) protein is O-methyltransferase 10 (omt10).